The sequence spans 384 residues: Spermatogenesis-associated protein 32 (384 aa).

Positions 23–60 (RDDLSQHQIQEEQELEADMLEQKPQLQVDLDLDPDPDP) are disordered. Residues Ser-167 and Ser-170 each carry the phosphoserine modification. 3 disordered regions span residues 211–232 (DAHSAPPTTSSQAPSPLLSSDL), 284–310 (VEEREPENHAETLPEKPREARAPLKSW), and 340–366 (LLQPPATSPLLQGSKEDSVPPGKEKEN). Residues 214-231 (SAPPTTSSQAPSPLLSSD) show a composition bias toward low complexity. The segment covering 353 to 366 (SKEDSVPPGKEKEN) has biased composition (basic and acidic residues).

Interacts with syntaxin-1 and ACTB. Detected in testis, and on the acrosomal cap of spermatids.

The protein is Spermatogenesis-associated protein 32 (SPATA32) of Homo sapiens (Human).